A 1185-amino-acid chain; its full sequence is Chromosome partition protein Smc (1185 aa).

Position 34–41 (34–41) interacts with ATP; that stretch reads PNGSGKSN. Coiled-coil stretches lie at residues 174–376 and 412–526; these read WRRS…EKDI and ENIV…KLDV. The SMC hinge domain maps to 534-644; sequence VGEIISLQKK…CENIDNAFEI (111 aa). Residues 679-1039 are a coiled coil; sequence NIIGRKREIE…IDAMTEKMKG (361 aa).

Belongs to the SMC family. Homodimer.

Its subcellular location is the cytoplasm. Its function is as follows. Required for chromosome condensation and partitioning. In Clostridium kluyveri (strain NBRC 12016), this protein is Chromosome partition protein Smc.